The chain runs to 107 residues: Putative double-stranded DNA mimic protein Asuc_1259 (107 aa).

The protein belongs to the putative dsDNA mimic protein family.

Its function is as follows. May act as a double-stranded DNA (dsDNA) mimic. Probably regulates the activity of a dsDNA-binding protein. This is Putative double-stranded DNA mimic protein Asuc_1259 from Actinobacillus succinogenes (strain ATCC 55618 / DSM 22257 / CCUG 43843 / 130Z).